Consider the following 94-residue polypeptide: Sec-independent protein translocase protein TatA (94 aa).

A helical transmembrane segment spans residues 1-21 (MFGRLGAPEIILILVVIILLF). Residues 44-94 (AKAMKSEGQESTPAGPPNTDEQPPAQRTIQAAPGDVTSSRPVSEPTDTTKR) form a disordered region. Residues 62-72 (TDEQPPAQRTI) are compositionally biased toward polar residues.

Belongs to the TatA/E family. As to quaternary structure, the Tat system comprises two distinct complexes: a TatABC complex, containing multiple copies of TatA, TatB and TatC subunits, and a separate TatA complex, containing only TatA subunits. Substrates initially bind to the TatABC complex, which probably triggers association of the separate TatA complex to form the active translocon.

Its subcellular location is the cell membrane. Its function is as follows. Part of the twin-arginine translocation (Tat) system that transports large folded proteins containing a characteristic twin-arginine motif in their signal peptide across membranes. TatA could form the protein-conducting channel of the Tat system. In Streptomyces avermitilis (strain ATCC 31267 / DSM 46492 / JCM 5070 / NBRC 14893 / NCIMB 12804 / NRRL 8165 / MA-4680), this protein is Sec-independent protein translocase protein TatA.